The sequence spans 488 residues: MWENKFAKESLTFDDVLLIPAASDVLPSDVDLSVKLSDKIKLNIPVISAGMDTVTESKMAIAMARQGGLGVIHKNMGVEEQADEVQKVKRSENGVISNPFFLTPEESVYEAEALMGKYRISGVPIVDNQEDRKLIGILTNRDLRFIEDFSIKISDVMTKDNLITAPVGTTLDEAEAILQKHKIEKLPLVENGRLEGLITIKDIEKVLEFPYAAKDEHGRLLAAAAIGTSKDTEIRAQKLVEAGVDALIIDTAHGHSKGVINQVKHIKETYPEITVVAGNVATAEATRALFEAGADVVKVGIGPGSICTTRVVAGVGVPQITAVYDCATEARKHGKAIIADGGIKFSGDIIKALAAGGHAVMLGSLLAGTEESPGATEVFQGRQYKVYRGMGSLGAMEKGSNDRYFQEDKTPRKFVPEGIEGRTAYKGPLQDTIYQLMGGVRAGMGYTGSENLKKLREEAQFTRMGPAGLAESHPHNVQITKESPNYSF.

CBS domains lie at 95-153 and 157-216; these read VISN…SIKI and MTKD…AKDE. NAD(+) contacts are provided by residues Asp250 and 300–302; that span reads GIG. Gly302 and Gly304 together coordinate K(+). Ser305 is an IMP binding site. Cys307 is a K(+) binding site. The active-site Thioimidate intermediate is Cys307. IMP-binding positions include 340 to 342, 363 to 364, and 387 to 391; these read DGG, GS, and YRGMG. Arg403 functions as the Proton acceptor in the catalytic mechanism. Glu417 is an IMP binding site. Positions 467 to 488 are disordered; sequence AGLAESHPHNVQITKESPNYSF. Glu471, Ser472, and His473 together coordinate K(+). The span at 475–488 shows a compositional bias: polar residues; that stretch reads HNVQITKESPNYSF.

The protein belongs to the IMPDH/GMPR family. Homotetramer. Requires K(+) as cofactor.

The catalysed reaction is IMP + NAD(+) + H2O = XMP + NADH + H(+). It functions in the pathway purine metabolism; XMP biosynthesis via de novo pathway; XMP from IMP: step 1/1. With respect to regulation, mycophenolic acid (MPA) is a non-competitive inhibitor that prevents formation of the closed enzyme conformation by binding to the same site as the amobile flap. In contrast, mizoribine monophosphate (MZP) is a competitive inhibitor that induces the closed conformation. MPA is a potent inhibitor of mammalian IMPDHs but a poor inhibitor of the bacterial enzymes. MZP is a more potent inhibitor of bacterial IMPDH. Catalyzes the conversion of inosine 5'-phosphate (IMP) to xanthosine 5'-phosphate (XMP), the first committed and rate-limiting step in the de novo synthesis of guanine nucleotides, and therefore plays an important role in the regulation of cell growth. This chain is Inosine-5'-monophosphate dehydrogenase, found in Staphylococcus epidermidis (strain ATCC 35984 / DSM 28319 / BCRC 17069 / CCUG 31568 / BM 3577 / RP62A).